A 559-amino-acid chain; its full sequence is Transcription activator of gluconeogenesis ERT1-2 (559 aa).

The zn(2)-C6 fungal-type DNA-binding region spans 23–51 (CIHCQRTHLTCDNNRPCERCVARGFADTC). Disordered regions lie at residues 63–159 (DDKE…TPSQ), 231–263 (SNSLLLGNNSQSPNTHSPHNQDQPTPQAATPSA), and 329–349 (AGQPQNTNGNGNGSEAPDSPS). 2 stretches are compositionally biased toward low complexity: residues 139–159 (QGPQRQGAQQPQGGQSSTPSQ) and 231–244 (SNSLLLGNNSQSPN). Residues 245 to 260 (THSPHNQDQPTPQAAT) show a composition bias toward polar residues. The region spanning 440 to 512 (ALLEYQKFIS…ELFSRIAFGD (73 aa)) is the PAS domain.

Belongs to the ERT1/acuK family.

It localises to the nucleus. Its function is as follows. Transcription factor which regulates nonfermentable carbon utilization. Activator of gluconeogenetic genes. The chain is Transcription activator of gluconeogenesis ERT1-2 (ERT1-2) from Yarrowia lipolytica (strain CLIB 122 / E 150) (Yeast).